Consider the following 169-residue polypeptide: uncharacterized protein (169 aa).

This is an uncharacterized protein from Mycoplasma genitalium (strain ATCC 33530 / DSM 19775 / NCTC 10195 / G37) (Mycoplasmoides genitalium).